We begin with the raw amino-acid sequence, 361 residues long: tRNA/tmRNA (uracil-C(5))-methyltransferase (361 aa).

S-adenosyl-L-methionine is bound by residues glutamine 185, tyrosine 213, asparagine 218, glutamate 234, and aspartate 294. Cysteine 319 (nucleophile) is an active-site residue. Glutamate 353 serves as the catalytic Proton acceptor.

The protein belongs to the class I-like SAM-binding methyltransferase superfamily. RNA M5U methyltransferase family. TrmA subfamily.

The enzyme catalyses uridine(54) in tRNA + S-adenosyl-L-methionine = 5-methyluridine(54) in tRNA + S-adenosyl-L-homocysteine + H(+). The catalysed reaction is uridine(341) in tmRNA + S-adenosyl-L-methionine = 5-methyluridine(341) in tmRNA + S-adenosyl-L-homocysteine + H(+). Its function is as follows. Dual-specificity methyltransferase that catalyzes the formation of 5-methyluridine at position 54 (m5U54) in all tRNAs, and that of position 341 (m5U341) in tmRNA (transfer-mRNA). The protein is tRNA/tmRNA (uracil-C(5))-methyltransferase of Pseudomonas putida (strain ATCC 47054 / DSM 6125 / CFBP 8728 / NCIMB 11950 / KT2440).